The chain runs to 148 residues: Ribonuclease H (148 aa).

One can recognise an RNase H type-1 domain in the interval 3-144 (AEETVEIFTD…ADALANRGIE (142 aa)). 4 residues coordinate Mg(2+): D12, E50, D72, and D136. The disordered stretch occupies residues 129 to 148 (HPENERADALANRGIEELKG).

It belongs to the RNase H family. Monomer. It depends on Mg(2+) as a cofactor.

It is found in the cytoplasm. It catalyses the reaction Endonucleolytic cleavage to 5'-phosphomonoester.. In terms of biological role, endonuclease that specifically degrades the RNA of RNA-DNA hybrids. In Dechloromonas aromatica (strain RCB), this protein is Ribonuclease H.